The sequence spans 448 residues: Phosphoglucosamine mutase (448 aa).

The active-site Phosphoserine intermediate is the Ser-100. Positions 100, 240, 242, and 244 each coordinate Mg(2+). Position 100 is a phosphoserine (Ser-100).

Belongs to the phosphohexose mutase family. Mg(2+) is required as a cofactor. In terms of processing, activated by phosphorylation.

It carries out the reaction alpha-D-glucosamine 1-phosphate = D-glucosamine 6-phosphate. In terms of biological role, catalyzes the conversion of glucosamine-6-phosphate to glucosamine-1-phosphate. The sequence is that of Phosphoglucosamine mutase from Clostridium perfringens (strain SM101 / Type A).